Here is a 282-residue protein sequence, read N- to C-terminus: Elongation factor Ts (282 aa).

Residues 80–83 form an involved in Mg(2+) ion dislocation from EF-Tu region; that stretch reads TDFV.

This sequence belongs to the EF-Ts family.

The protein localises to the cytoplasm. Associates with the EF-Tu.GDP complex and induces the exchange of GDP to GTP. It remains bound to the aminoacyl-tRNA.EF-Tu.GTP complex up to the GTP hydrolysis stage on the ribosome. The protein is Elongation factor Ts of Chlamydia trachomatis serovar A (strain ATCC VR-571B / DSM 19440 / HAR-13).